Here is a 261-residue protein sequence, read N- to C-terminus: Cytochrome c oxidase subunit 3 (261 aa).

The Mitochondrial matrix segment spans residues 1-15 (MTHQTHAYHMVNPSP). Residues 16–34 (WPLTGALSALLLTSGLIMW) form a helical membrane-spanning segment. Over 35–40 (FHFNSF) the chain is Mitochondrial intermembrane. The chain crosses the membrane as a helical span at residues 41–66 (LLVIIGLTCMLLTMYQWWRDIVREGT). The Mitochondrial matrix segment spans residues 67–72 (FQGHHT). Residues 73–105 (PVVQKGLRYGMVLFIVSEVFFFLGFFWAFYHSS) form a helical membrane-spanning segment. Residues 106 to 128 (LAPTPELGGCWPPTGIHPLNPLE) lie on the Mitochondrial intermembrane side of the membrane. The chain crosses the membrane as a helical span at residues 129–152 (VPLLNTSILLASGVSITWAHHSLM). At 153-155 (EGN) the chain is on the mitochondrial matrix side. A helical membrane pass occupies residues 156 to 183 (RKQMIQALSITILLGIYFTILQASEYYE). The Mitochondrial intermembrane segment spans residues 184 to 190 (SSFTISD). The chain crosses the membrane as a helical span at residues 191-223 (GVYGSTFFVATGFHGLHVIIGTTFLIVCLLRQF). The Mitochondrial matrix segment spans residues 224 to 232 (NFHFTSTHH). The helical transmembrane segment at 233–256 (FGFEAAAWYWHFVDVVWLFLYVSI) threads the bilayer. The Mitochondrial intermembrane portion of the chain corresponds to 257 to 261 (YWWGS).

It belongs to the cytochrome c oxidase subunit 3 family. In terms of assembly, component of the cytochrome c oxidase (complex IV, CIV), a multisubunit enzyme composed of 14 subunits. The complex is composed of a catalytic core of 3 subunits MT-CO1, MT-CO2 and MT-CO3, encoded in the mitochondrial DNA, and 11 supernumerary subunits COX4I, COX5A, COX5B, COX6A, COX6B, COX6C, COX7A, COX7B, COX7C, COX8 and NDUFA4, which are encoded in the nuclear genome. The complex exists as a monomer or a dimer and forms supercomplexes (SCs) in the inner mitochondrial membrane with NADH-ubiquinone oxidoreductase (complex I, CI) and ubiquinol-cytochrome c oxidoreductase (cytochrome b-c1 complex, complex III, CIII), resulting in different assemblies (supercomplex SCI(1)III(2)IV(1) and megacomplex MCI(2)III(2)IV(2)).

The protein resides in the mitochondrion inner membrane. The catalysed reaction is 4 Fe(II)-[cytochrome c] + O2 + 8 H(+)(in) = 4 Fe(III)-[cytochrome c] + 2 H2O + 4 H(+)(out). Component of the cytochrome c oxidase, the last enzyme in the mitochondrial electron transport chain which drives oxidative phosphorylation. The respiratory chain contains 3 multisubunit complexes succinate dehydrogenase (complex II, CII), ubiquinol-cytochrome c oxidoreductase (cytochrome b-c1 complex, complex III, CIII) and cytochrome c oxidase (complex IV, CIV), that cooperate to transfer electrons derived from NADH and succinate to molecular oxygen, creating an electrochemical gradient over the inner membrane that drives transmembrane transport and the ATP synthase. Cytochrome c oxidase is the component of the respiratory chain that catalyzes the reduction of oxygen to water. Electrons originating from reduced cytochrome c in the intermembrane space (IMS) are transferred via the dinuclear copper A center (CU(A)) of subunit 2 and heme A of subunit 1 to the active site in subunit 1, a binuclear center (BNC) formed by heme A3 and copper B (CU(B)). The BNC reduces molecular oxygen to 2 water molecules using 4 electrons from cytochrome c in the IMS and 4 protons from the mitochondrial matrix. This chain is Cytochrome c oxidase subunit 3 (MT-CO3), found in Osphranter robustus (Wallaroo).